The sequence spans 432 residues: Adenylosuccinate synthetase (432 aa).

GTP-binding positions include 13–19 (GDEGKGK) and 41–43 (GHT). Residue Asp-14 is the Proton acceptor of the active site. The Mg(2+) site is built by Asp-14 and Gly-41. IMP is bound by residues 14-17 (DEGK), 39-42 (NAGH), Thr-130, Arg-144, Gln-225, Thr-240, and Arg-304. The active-site Proton donor is the His-42. 300–306 (ATTGRRR) contributes to the substrate binding site. GTP-binding positions include Arg-306, 332 to 334 (KLD), and 415 to 417 (STG).

It belongs to the adenylosuccinate synthetase family. As to quaternary structure, homodimer. The cofactor is Mg(2+).

Its subcellular location is the cytoplasm. It carries out the reaction IMP + L-aspartate + GTP = N(6)-(1,2-dicarboxyethyl)-AMP + GDP + phosphate + 2 H(+). Its pathway is purine metabolism; AMP biosynthesis via de novo pathway; AMP from IMP: step 1/2. Plays an important role in the de novo pathway of purine nucleotide biosynthesis. Catalyzes the first committed step in the biosynthesis of AMP from IMP. This is Adenylosuccinate synthetase from Salmonella paratyphi A (strain AKU_12601).